The following is a 698-amino-acid chain: Protein artemis (698 aa).

Thr-380 is subject to Phosphothreonine. Phosphoserine is present on Ser-385. Disordered regions lie at residues 445 to 485 (ANFV…DPDV), 505 to 595 (LENL…DSIS), and 620 to 669 (NGVP…LPKP). Positions 449–461 (DCDESNSDSEGEL) are enriched in acidic residues. Residues 508–521 (LPSSIETGGSQSPK) show a composition bias toward polar residues. The span at 538-551 (THISSQNSSQSTHI) shows a compositional bias: low complexity. Residues 552 to 583 (TDQGSQGWDSQCDTVLLSSQEKSGGDSTSLNK) are compositionally biased toward polar residues. The segment covering 641-655 (TSLTSTQADSQSSSD) has biased composition (low complexity). Phosphoserine; by ATM is present on Ser-650.

Belongs to the DNA repair metallo-beta-lactamase (DRMBL) family. Interacts with LIG4; the interaction is direct. Interacts with ATM. Interacts with BRCA1. Interacts with PRKDC. Interacts with TP53BP1. Also exhibits ATM- and phosphorylation-dependent interaction with the MRN complex, composed of MRE11, RAD50, and NBN. Post-translationally, phosphorylation on undefined residues by PRKDC may stimulate endonucleolytic activity on 5' and 3' hairpins and overhangs. PRKDC must remain present, even after phosphorylation, for efficient hairpin opening. Also phosphorylated by ATM in response to ionizing radiation (IR) and by ATR in response to ultraviolet (UV) radiation.

It is found in the nucleus. In terms of biological role, required for V(D)J recombination, the process by which exons encoding the antigen-binding domains of immunoglobulins and T-cell receptor proteins are assembled from individual V, (D), and J gene segments. V(D)J recombination is initiated by the lymphoid specific RAG endonuclease complex, which generates site specific DNA double strand breaks (DSBs). These DSBs present two types of DNA end structures: hairpin sealed coding ends and phosphorylated blunt signal ends. These ends are independently repaired by the non homologous end joining (NHEJ) pathway to form coding and signal joints respectively. This protein exhibits single-strand specific 5'-3' exonuclease activity in isolation, and acquires endonucleolytic activity on 5' and 3' hairpins and overhangs when in a complex with PRKDC. The latter activity is required specifically for the resolution of closed hairpins prior to the formation of the coding joint. May also be required for the repair of complex DSBs induced by ionizing radiation, which require substantial end-processing prior to religation by NHEJ. This Rattus norvegicus (Rat) protein is Protein artemis (Dclre1c).